Reading from the N-terminus, the 137-residue chain is Large ribosomal subunit protein uL16 (137 aa).

The protein belongs to the universal ribosomal protein uL16 family. As to quaternary structure, part of the 50S ribosomal subunit.

Binds 23S rRNA and is also seen to make contacts with the A and possibly P site tRNAs. This chain is Large ribosomal subunit protein uL16, found in Pseudomonas syringae pv. tomato (strain ATCC BAA-871 / DC3000).